The following is an 804-amino-acid chain: Leucine--tRNA ligase (804 aa).

The 'HIGH' region motif lies at 40 to 51 (PYPSGQGLHVGH). The 'KMSKS' region signature appears at 576–580 (KMSKS). Lys579 is an ATP binding site.

The protein belongs to the class-I aminoacyl-tRNA synthetase family.

The protein resides in the cytoplasm. The enzyme catalyses tRNA(Leu) + L-leucine + ATP = L-leucyl-tRNA(Leu) + AMP + diphosphate. The sequence is that of Leucine--tRNA ligase from Oceanobacillus iheyensis (strain DSM 14371 / CIP 107618 / JCM 11309 / KCTC 3954 / HTE831).